Here is a 684-residue protein sequence, read N- to C-terminus: Glycine--tRNA ligase beta subunit (684 aa).

This sequence belongs to the class-II aminoacyl-tRNA synthetase family. In terms of assembly, tetramer of two alpha and two beta subunits.

The protein resides in the cytoplasm. The catalysed reaction is tRNA(Gly) + glycine + ATP = glycyl-tRNA(Gly) + AMP + diphosphate. This chain is Glycine--tRNA ligase beta subunit, found in Pseudomonas fluorescens (strain ATCC BAA-477 / NRRL B-23932 / Pf-5).